A 668-amino-acid polypeptide reads, in one-letter code: UvrABC system protein B (668 aa).

The region spanning 31 to 416 is the Helicase ATP-binding domain; that stretch reads QGITDGVPAQ…RGHIIEQIIR (386 aa). 44-51 provides a ligand contact to ATP; sequence GTTGSGKT. A Beta-hairpin motif is present at residues 97 to 120; that stretch reads YYDYYQPEAYIARSDTYIEKSLLI. The 164-residue stretch at 433–596 folds into the Helicase C-terminal domain; the sequence is QIDDLLEEIR…ITPQPIIKPI (164 aa). Residues 621-656 form the UVR domain; that stretch reads EASIKTYEEAMYQAAQEFQFDEAVKYRDLMNAAKKQ.

Belongs to the UvrB family. As to quaternary structure, forms a heterotetramer with UvrA during the search for lesions. Interacts with UvrC in an incision complex.

The protein resides in the cytoplasm. Functionally, the UvrABC repair system catalyzes the recognition and processing of DNA lesions. A damage recognition complex composed of 2 UvrA and 2 UvrB subunits scans DNA for abnormalities. Upon binding of the UvrA(2)B(2) complex to a putative damaged site, the DNA wraps around one UvrB monomer. DNA wrap is dependent on ATP binding by UvrB and probably causes local melting of the DNA helix, facilitating insertion of UvrB beta-hairpin between the DNA strands. Then UvrB probes one DNA strand for the presence of a lesion. If a lesion is found the UvrA subunits dissociate and the UvrB-DNA preincision complex is formed. This complex is subsequently bound by UvrC and the second UvrB is released. If no lesion is found, the DNA wraps around the other UvrB subunit that will check the other stand for damage. The polypeptide is UvrABC system protein B (Chlamydia trachomatis serovar A (strain ATCC VR-571B / DSM 19440 / HAR-13)).